The chain runs to 1290 residues: DNA-directed RNA polymerase subunit beta' (1290 aa).

Residues C60, C62, C75, and C78 each coordinate Zn(2+). Residues D535, D537, and D539 each coordinate Mg(2+). Zn(2+)-binding residues include C875, C953, C960, and C963.

It belongs to the RNA polymerase beta' chain family. In terms of assembly, the RNAP catalytic core consists of 2 alpha, 1 beta, 1 beta' and 1 omega subunit. When a sigma factor is associated with the core the holoenzyme is formed, which can initiate transcription. Requires Mg(2+) as cofactor. Zn(2+) is required as a cofactor.

It catalyses the reaction RNA(n) + a ribonucleoside 5'-triphosphate = RNA(n+1) + diphosphate. Its function is as follows. DNA-dependent RNA polymerase catalyzes the transcription of DNA into RNA using the four ribonucleoside triphosphates as substrates. The sequence is that of DNA-directed RNA polymerase subunit beta' from Nocardioides sp. (strain ATCC BAA-499 / JS614).